The sequence spans 107 residues: U-scoloptoxin(18)-Er1a (107 aa).

A signal peptide spans 1–21 (MQRFLCLVACSVVLLVLGIVA).

This sequence belongs to the scoloptoxin-18 family. Post-translationally, contains 5 disulfide bonds. As to expression, expressed by the venom gland.

It is found in the secreted. This is U-scoloptoxin(18)-Er1a from Ethmostigmus rubripes (Giant centipede).